A 705-amino-acid chain; its full sequence is ATP-dependent DNA helicase Q-like 2 (705 aa).

Residues 1–30 adopt a coiled-coil conformation; sequence MESEAIQEDLQNLDVELKDVQGQISALIEH. A Helicase ATP-binding domain is found at 98-273; that stretch reads INAIMTGRDV…IEMLHIPKCV (176 aa). 111–118 serves as a coordination point for ATP; it reads MAAGGGKS. Residues 217–220 carry the DEAH box motif; the sequence is DEAH. The 153-residue stretch at 298–450 folds into the Helicase C-terminal domain; sequence VVDEIAEFIR…DIVRYCQSKT (153 aa). The HRDC domain maps to 591–670; sequence SITFSGLELK…MRHEAVSEQL (80 aa). The segment at 668-705 is disordered; the sequence is EQLVEDPTKEETCKSRLRKRAKTQKDVVLVESSGEEEA.

This sequence belongs to the helicase family. RecQ subfamily. Interacts with WEX. It depends on Mg(2+) as a cofactor. Requires Mn(2+) as cofactor. As to expression, expressed in shoots and flowers. Expressed in young leaves, inflorescences, roots, shoot apical meristem, young siliques, and mature green siliques.

It is found in the nucleus. The catalysed reaction is Couples ATP hydrolysis with the unwinding of duplex DNA by translocating in the 3'-5' direction.. It catalyses the reaction ATP + H2O = ADP + phosphate + H(+). In terms of biological role, 3'-5' DNA helicase that may play a role in the repair of DNA. Its DNA unwinding activity in vitro is dependent on magnesium, and ATP or dATP. Can use GTP/dGTP, CTP/dCTP or UTP/dUTP as nucleotide cofactors. Catalyzes Holliday junction branch migration and replication fork regression. Disrupts D-loop structures. Unwinds G-quadruplex DNA, found in telomeric DNA. The polypeptide is ATP-dependent DNA helicase Q-like 2 (Arabidopsis thaliana (Mouse-ear cress)).